The primary structure comprises 331 residues: Ketol-acid reductoisomerase (NADP(+)) (331 aa).

Positions 2-182 (AKLFYDSDAD…GGTRAGILET (181 aa)) constitute a KARI N-terminal Rossmann domain. Residues 25–28 (YGSQ), Ser-51, Ser-53, and 83–86 (DEFQ) contribute to the NADP(+) site. His-108 is a catalytic residue. Residue Gly-134 coordinates NADP(+). The 146-residue stretch at 183–328 (NFKEETETDL…KTLRSMFSWL (146 aa)) folds into the KARI C-terminal knotted domain. Mg(2+)-binding residues include Asp-191, Glu-195, Glu-227, and Glu-231. Residue Ser-252 participates in substrate binding.

Belongs to the ketol-acid reductoisomerase family. Requires Mg(2+) as cofactor.

The enzyme catalyses (2R)-2,3-dihydroxy-3-methylbutanoate + NADP(+) = (2S)-2-acetolactate + NADPH + H(+). It catalyses the reaction (2R,3R)-2,3-dihydroxy-3-methylpentanoate + NADP(+) = (S)-2-ethyl-2-hydroxy-3-oxobutanoate + NADPH + H(+). The protein operates within amino-acid biosynthesis; L-isoleucine biosynthesis; L-isoleucine from 2-oxobutanoate: step 2/4. It participates in amino-acid biosynthesis; L-valine biosynthesis; L-valine from pyruvate: step 2/4. Its function is as follows. Involved in the biosynthesis of branched-chain amino acids (BCAA). Catalyzes an alkyl-migration followed by a ketol-acid reduction of (S)-2-acetolactate (S2AL) to yield (R)-2,3-dihydroxy-isovalerate. In the isomerase reaction, S2AL is rearranged via a Mg-dependent methyl migration to produce 3-hydroxy-3-methyl-2-ketobutyrate (HMKB). In the reductase reaction, this 2-ketoacid undergoes a metal-dependent reduction by NADPH to yield (R)-2,3-dihydroxy-isovalerate. The protein is Ketol-acid reductoisomerase (NADP(+)) of Prochlorococcus marinus (strain NATL2A).